The primary structure comprises 514 residues: 2,3-bisphosphoglycerate-independent phosphoglycerate mutase (514 aa).

Positions 14 and 64 each coordinate Mn(2+). Catalysis depends on S64, which acts as the Phosphoserine intermediate. Substrate-binding positions include H125, 155 to 156 (RD), R187, R193, 263 to 266 (RADR), and K336. Mn(2+) is bound by residues D403, H407, D444, H445, and H463.

This sequence belongs to the BPG-independent phosphoglycerate mutase family. As to quaternary structure, monomer. Mn(2+) serves as cofactor.

The enzyme catalyses (2R)-2-phosphoglycerate = (2R)-3-phosphoglycerate. Its pathway is carbohydrate degradation; glycolysis; pyruvate from D-glyceraldehyde 3-phosphate: step 3/5. Its function is as follows. Catalyzes the interconversion of 2-phosphoglycerate and 3-phosphoglycerate. The protein is 2,3-bisphosphoglycerate-independent phosphoglycerate mutase of Salmonella paratyphi B (strain ATCC BAA-1250 / SPB7).